Here is a 360-residue protein sequence, read N- to C-terminus: Phosphoserine aminotransferase (360 aa).

Arg-42 is a binding site for L-glutamate. Pyridoxal 5'-phosphate is bound by residues 76–77 (AS), Trp-102, Thr-152, Asp-172, and Gln-195. Position 196 is an N6-(pyridoxal phosphate)lysine (Lys-196). 237 to 238 (NT) is a binding site for pyridoxal 5'-phosphate.

It belongs to the class-V pyridoxal-phosphate-dependent aminotransferase family. SerC subfamily. As to quaternary structure, homodimer. Requires pyridoxal 5'-phosphate as cofactor.

It localises to the cytoplasm. It catalyses the reaction O-phospho-L-serine + 2-oxoglutarate = 3-phosphooxypyruvate + L-glutamate. The enzyme catalyses 4-(phosphooxy)-L-threonine + 2-oxoglutarate = (R)-3-hydroxy-2-oxo-4-phosphooxybutanoate + L-glutamate. It participates in amino-acid biosynthesis; L-serine biosynthesis; L-serine from 3-phospho-D-glycerate: step 2/3. Functionally, catalyzes the reversible conversion of 3-phosphohydroxypyruvate to phosphoserine and of 3-hydroxy-2-oxo-4-phosphonooxybutanoate to phosphohydroxythreonine. The protein is Phosphoserine aminotransferase of Bacillus cereus (strain ZK / E33L).